Consider the following 476-residue polypeptide: Bifunctional protein HldE (476 aa).

The interval 1-318 (MLSKKPNILV…EYESSLHKSN (318 aa)) is ribokinase. 195–198 (NKKE) contacts ATP. The active site involves aspartate 263. The tract at residues 345–476 (FTNGCFDILH…RIQENEKCNN (132 aa)) is cytidylyltransferase.

It in the N-terminal section; belongs to the carbohydrate kinase PfkB family. In the C-terminal section; belongs to the cytidylyltransferase family. As to quaternary structure, homodimer.

The enzyme catalyses D-glycero-beta-D-manno-heptose 7-phosphate + ATP = D-glycero-beta-D-manno-heptose 1,7-bisphosphate + ADP + H(+). The catalysed reaction is D-glycero-beta-D-manno-heptose 1-phosphate + ATP + H(+) = ADP-D-glycero-beta-D-manno-heptose + diphosphate. It functions in the pathway nucleotide-sugar biosynthesis; ADP-L-glycero-beta-D-manno-heptose biosynthesis; ADP-L-glycero-beta-D-manno-heptose from D-glycero-beta-D-manno-heptose 7-phosphate: step 1/4. It participates in nucleotide-sugar biosynthesis; ADP-L-glycero-beta-D-manno-heptose biosynthesis; ADP-L-glycero-beta-D-manno-heptose from D-glycero-beta-D-manno-heptose 7-phosphate: step 3/4. Its function is as follows. Catalyzes the phosphorylation of D-glycero-D-manno-heptose 7-phosphate at the C-1 position to selectively form D-glycero-beta-D-manno-heptose-1,7-bisphosphate. Catalyzes the ADP transfer from ATP to D-glycero-beta-D-manno-heptose 1-phosphate, yielding ADP-D-glycero-beta-D-manno-heptose. The sequence is that of Bifunctional protein HldE from Aliarcobacter butzleri (strain RM4018) (Arcobacter butzleri).